The following is a 451-amino-acid chain: Bifunctional protein GlmU (451 aa).

The pyrophosphorylase stretch occupies residues 1 to 225 (MVVVAILAAG…YQEILGINDR (225 aa)). Residues 7–10 (LAAG), K21, Q72, and 77–78 (GT) each bind UDP-N-acetyl-alpha-D-glucosamine. Mg(2+) is bound at residue D102. Positions 139, 154, 169, and 223 each coordinate UDP-N-acetyl-alpha-D-glucosamine. Mg(2+) is bound at residue N223. Residues 226-246 (LQLATAYEILQRRVKEQWMMA) form a linker region. The N-acetyltransferase stretch occupies residues 247-451 (GVTLIDPNSI…LGWRRKSGES (205 aa)). The UDP-N-acetyl-alpha-D-glucosamine site is built by R328 and K346. The active-site Proton acceptor is the H358. 2 residues coordinate UDP-N-acetyl-alpha-D-glucosamine: Y361 and N372. Residues A375, 381–382 (NY), S400, A418, and R435 contribute to the acetyl-CoA site.

In the N-terminal section; belongs to the N-acetylglucosamine-1-phosphate uridyltransferase family. It in the C-terminal section; belongs to the transferase hexapeptide repeat family. Homotrimer. Mg(2+) serves as cofactor.

It is found in the cytoplasm. It carries out the reaction alpha-D-glucosamine 1-phosphate + acetyl-CoA = N-acetyl-alpha-D-glucosamine 1-phosphate + CoA + H(+). It catalyses the reaction N-acetyl-alpha-D-glucosamine 1-phosphate + UTP + H(+) = UDP-N-acetyl-alpha-D-glucosamine + diphosphate. Its pathway is nucleotide-sugar biosynthesis; UDP-N-acetyl-alpha-D-glucosamine biosynthesis; N-acetyl-alpha-D-glucosamine 1-phosphate from alpha-D-glucosamine 6-phosphate (route II): step 2/2. It functions in the pathway nucleotide-sugar biosynthesis; UDP-N-acetyl-alpha-D-glucosamine biosynthesis; UDP-N-acetyl-alpha-D-glucosamine from N-acetyl-alpha-D-glucosamine 1-phosphate: step 1/1. The protein operates within bacterial outer membrane biogenesis; LPS lipid A biosynthesis. Catalyzes the last two sequential reactions in the de novo biosynthetic pathway for UDP-N-acetylglucosamine (UDP-GlcNAc). The C-terminal domain catalyzes the transfer of acetyl group from acetyl coenzyme A to glucosamine-1-phosphate (GlcN-1-P) to produce N-acetylglucosamine-1-phosphate (GlcNAc-1-P), which is converted into UDP-GlcNAc by the transfer of uridine 5-monophosphate (from uridine 5-triphosphate), a reaction catalyzed by the N-terminal domain. This chain is Bifunctional protein GlmU, found in Nostoc sp. (strain PCC 7120 / SAG 25.82 / UTEX 2576).